Here is a 491-residue protein sequence, read N- to C-terminus: [Pyruvate dehydrogenase (acetyl-transferring)] kinase 2, mitochondrial (491 aa).

Residues 153–480 (PTIRTLEDAS…DVVLKLGNLM (328 aa)) form the Histidine kinase domain. Residues 300–307 (EILRNTYE), aspartate 341, 359–360 (SK), and 383–446 (DEVH…GIGL) contribute to the ATP site.

Belongs to the PDK/BCKDK protein kinase family. Interacts with PKP1.

Its subcellular location is the mitochondrion matrix. It carries out the reaction L-seryl-[pyruvate dehydrogenase E1 alpha subunit] + ATP = O-phospho-L-seryl-[pyruvate dehydrogenase E1 alpha subunit] + ADP + H(+). In terms of biological role, inhibits the mitochondrial pyruvate dehydrogenase complex by phosphorylation of the E1 alpha subunit (PDA1), thus contributing to the regulation of glucose metabolism. The sequence is that of [Pyruvate dehydrogenase (acetyl-transferring)] kinase 2, mitochondrial from Saccharomyces cerevisiae (strain ATCC 204508 / S288c) (Baker's yeast).